Reading from the N-terminus, the 80-residue chain is MSFLDKFFGKEKSSAKSASDRLKLVLAHERAVNLPYLEEMKREILEVIKKYTHAEKIEIKADSNQQIDTLEVEIVLGKNS.

It belongs to the MinE family.

Prevents the cell division inhibition by proteins MinC and MinD at internal division sites while permitting inhibition at polar sites. This ensures cell division at the proper site by restricting the formation of a division septum at the midpoint of the long axis of the cell. The sequence is that of Cell division topological specificity factor from Wolinella succinogenes (strain ATCC 29543 / DSM 1740 / CCUG 13145 / JCM 31913 / LMG 7466 / NCTC 11488 / FDC 602W) (Vibrio succinogenes).